Consider the following 248-residue polypeptide: MSRSYDSRTTIFSPEGRLYQVEYALEAINHAGVALGIVAKDGIVLAAEKKVTSKLLEQEESAEKLYHIGDNMLCAVAGLTADANILINYARRVGQQYLQTFNEEMPCEQLVRRVCDLKQGYTQYGGLRPFGVSFLYAGWDHIRGYQLFQSNPSGNYGSWQANSIGGNSTSVQSLMRQEYKDDINLDEASAMAVKFLSKTLDSNSLTHEKIEFATITKDTTKNKMVCKIWKSDEINEVLNKYQETQRQS.

This sequence belongs to the peptidase T1A family. As to quaternary structure, the 26S proteasome consists of a 20S proteasome core and two 19S regulatory subunits. The 20S proteasome core is composed of 28 subunits that are arranged in four stacked rings, resulting in a barrel-shaped structure. The two end rings are each formed by seven alpha subunits, and the two central rings are each formed by seven beta subunits. The catalytic chamber with the active sites is on the inside of the barrel.

It is found in the cytoplasm. The protein localises to the nucleus. In terms of biological role, the proteasome is a multicatalytic proteinase complex which is characterized by its ability to cleave peptides with Arg, Phe, Tyr, Leu, and Glu adjacent to the leaving group at neutral or slightly basic pH. The proteasome has an ATP-dependent proteolytic activity. In Schizosaccharomyces pombe (strain 972 / ATCC 24843) (Fission yeast), this protein is Probable proteasome subunit alpha type-3.